The chain runs to 316 residues: Protein lifeguard 2 (316 aa).

The disordered stretch occupies residues 1 to 49 (MTQGKLSVANKAPGTEGQQQANGEKKDAPAVPSAPPSYEEATSGEGLKA). Helical transmembrane passes span 106-126 (VYTI…LFTF), 138-158 (PGWY…LACC), and 165-185 (FPWN…LTGM). N-linked (GlcNAc...) asparagine glycosylation is present at asparagine 191. 4 consecutive transmembrane segments (helical) span residues 194–214 (SVLL…IFSF), 225–245 (GVLF…AILL), 251–271 (PWLH…FLAF), and 290–310 (IFGA…FLQL).

It belongs to the BI1 family. LFG subfamily. Interacts with FAS/TNFRSF6 and BAX. As to expression, expressed at high levels on dendrites and to a lesser extent on the soma and axons of neurons in various regions of brain.

Its subcellular location is the cell membrane. It localises to the membrane raft. It is found in the postsynaptic cell membrane. In terms of biological role, antiapoptotic protein which protects cells uniquely from Fas-induced apoptosis. Regulates Fas-mediated apoptosis in neurons by interfering with caspase-8 activation. Plays a role in cerebellar development by affecting cerebellar size, internal granular layer (IGL) thickness, and Purkinje cell (PC) development. The protein is Protein lifeguard 2 (Faim2) of Rattus norvegicus (Rat).